The sequence spans 562 residues: NAD-dependent malic enzyme (562 aa).

The active-site Proton donor is Tyr101. Arg154 provides a ligand contact to NAD(+). Lys172 serves as the catalytic Proton acceptor. The a divalent metal cation site is built by Glu243, Asp244, and Asp267. Asp267 and Asn415 together coordinate NAD(+).

It belongs to the malic enzymes family. In terms of assembly, homotetramer. The cofactor is Mg(2+). Mn(2+) is required as a cofactor.

The enzyme catalyses (S)-malate + NAD(+) = pyruvate + CO2 + NADH. It catalyses the reaction oxaloacetate + H(+) = pyruvate + CO2. The chain is NAD-dependent malic enzyme from Shewanella piezotolerans (strain WP3 / JCM 13877).